The sequence spans 448 residues: Putative flavin-containing monooxygenase FMO GS-OX-like 10 (448 aa).

18–23 (GAGAAG) lines the FAD pocket. 212 to 217 (GSSVSG) is an NADP(+) binding site.

It belongs to the FMO family. FAD is required as a cofactor.

Functionally, catalyzes the conversion of methylthioalkyl glucosinolates of any chain length into methylsulfinylalkyl glucosinolates. This chain is Putative flavin-containing monooxygenase FMO GS-OX-like 10, found in Arabidopsis thaliana (Mouse-ear cress).